The chain runs to 190 residues: Histone H5 (190 aa).

The interval 1 to 29 (MTESLVLSPAPAKPKRVKASRRSASHPTY) is disordered. Residues 13 to 24 (KPKRVKASRRSA) show a composition bias toward basic residues. A phosphoserine mark is found at serine 23, serine 30, serine 146, and serine 167. An H15 domain is found at 25–98 (SHPTYSEMIA…GASGSFRLAK (74 aa)). The segment at 87-190 (GVGASGSFRL…SGARKSPKKK (104 aa)) is disordered. Residues 104–190 (RSPGKKKKAV…SGARKSPKKK (87 aa)) show a composition bias toward basic residues.

This sequence belongs to the histone H1/H5 family. In terms of tissue distribution, erythroid cells.

It is found in the nucleus. It localises to the chromosome. Its function is as follows. Histone H5 performs the same function as H1, being necessary for the condensation of nucleosome chains into higher order structures, and replaces histone H1 in certain cells. In Gallus gallus (Chicken), this protein is Histone H5.